The chain runs to 313 residues: Porphobilinogen deaminase (313 aa).

Cys242 is modified (S-(dipyrrolylmethanemethyl)cysteine).

This sequence belongs to the HMBS family. As to quaternary structure, monomer. It depends on dipyrromethane as a cofactor.

The catalysed reaction is 4 porphobilinogen + H2O = hydroxymethylbilane + 4 NH4(+). It participates in porphyrin-containing compound metabolism; protoporphyrin-IX biosynthesis; coproporphyrinogen-III from 5-aminolevulinate: step 2/4. Its function is as follows. Tetrapolymerization of the monopyrrole PBG into the hydroxymethylbilane pre-uroporphyrinogen in several discrete steps. This is Porphobilinogen deaminase from Escherichia coli O17:K52:H18 (strain UMN026 / ExPEC).